The chain runs to 273 residues: Shikimate dehydrogenase (NADP(+)) (273 aa).

Shikimate contacts are provided by residues 15 to 17 (SKS) and threonine 62. Lysine 66 acts as the Proton acceptor in catalysis. Aspartate 78 is an NADP(+) binding site. Shikimate is bound by residues asparagine 87 and aspartate 103. Residues 127-131 (GAGGA), 150-155 (NRTYAR), and methionine 214 contribute to the NADP(+) site. Tyrosine 216 serves as a coordination point for shikimate. NADP(+) is bound at residue glycine 238.

It belongs to the shikimate dehydrogenase family. In terms of assembly, homodimer.

The enzyme catalyses shikimate + NADP(+) = 3-dehydroshikimate + NADPH + H(+). Its pathway is metabolic intermediate biosynthesis; chorismate biosynthesis; chorismate from D-erythrose 4-phosphate and phosphoenolpyruvate: step 4/7. In terms of biological role, involved in the biosynthesis of the chorismate, which leads to the biosynthesis of aromatic amino acids. Catalyzes the reversible NADPH linked reduction of 3-dehydroshikimate (DHSA) to yield shikimate (SA). The sequence is that of Shikimate dehydrogenase (NADP(+)) from Yersinia enterocolitica serotype O:8 / biotype 1B (strain NCTC 13174 / 8081).